A 204-amino-acid chain; its full sequence is Ras-related protein R-Ras2 (204 aa).

Alanine 2 carries the N-acetylalanine modification. Position 21–29 (21–29) interacts with GTP; sequence GGGGVGKSA. The Effector region motif lies at 43 to 51; the sequence is YDPTIEDSY. GTP-binding positions include 68–72, 127–130, and 157–159; these read DTAGQ, NKAD, and SAK. Serine 186 is modified (phosphoserine). N6-palmitoyl lysine attachment occurs at residues lysine 192, lysine 194, lysine 196, and lysine 197. Cysteine 199 is lipidated: S-palmitoyl cysteine. A Cysteine methyl ester modification is found at cysteine 201. A lipid anchor (S-farnesyl cysteine) is attached at cysteine 201. Residues 202–204 constitute a propeptide, removed in mature form; the sequence is VIF.

This sequence belongs to the small GTPase superfamily. Ras family. Interacts with RASSF5. May be post-translationally modified by both palmitoylation and polyisoprenylation. In terms of processing, fatty-acylation at Lys-192, Lys-194; lys-196 and Lys-197 is required for localization to the plasma membrane and activity. Defatty-acylated by SIRT6, affecting its localization to the plasma membrane. In terms of tissue distribution, ubiquitously present in all tissues examined, with the highest levels in heart, placenta, and skeletal muscle. Moderate levels in lung and liver; low levels in brain, kidney, and pancreas.

Its subcellular location is the cell membrane. The protein localises to the golgi apparatus membrane. It carries out the reaction GTP + H2O = GDP + phosphate + H(+). Its function is as follows. GTP-binding protein with GTPase activity, involved in the regulation of MAPK signaling pathway and thereby controlling multiple cellular processes. Regulates craniofacial development. The sequence is that of Ras-related protein R-Ras2 from Homo sapiens (Human).